The following is a 129-amino-acid chain: Ribulose bisphosphate carboxylase small subunit (129 aa).

Positions 109–129 (LRMTRTESNGRSQHYMWETQR) are disordered.

It belongs to the RuBisCO small chain family. As to quaternary structure, heterohexadecamer of 8 large and 8 small subunits.

In terms of biological role, ruBisCO catalyzes two reactions: the carboxylation of D-ribulose 1,5-bisphosphate, the primary event in carbon dioxide fixation, as well as the oxidative fragmentation of the pentose substrate. Both reactions occur simultaneously and in competition at the same active site. Although the small subunit is not catalytic it is essential for maximal activity. In Rhizobium meliloti (strain 1021) (Ensifer meliloti), this protein is Ribulose bisphosphate carboxylase small subunit.